The primary structure comprises 47 residues: Delta-actitoxin-Aspp1a (47 aa).

Disulfide bonds link C4-C44, C6-C34, and C27-C45.

This sequence belongs to the sea anemone sodium channel inhibitory toxin family. Type I subfamily.

The protein localises to the secreted. Its subcellular location is the nematocyst. Its function is as follows. Binds specifically to voltage-gated sodium channels (Nav) (site 3), thereby delaying their inactivation during signal transduction. Has a heart stimulation effect on isolated rat atria that is higher than that of Hk7a, Hk8a and Hk16a. In Anthopleura sp. (strain 'Zhanjiang') (Sea anemone), this protein is Delta-actitoxin-Aspp1a.